Here is an 892-residue protein sequence, read N- to C-terminus: DNA mismatch repair protein MutS (892 aa).

607-614 contributes to the ATP binding site; the sequence is GPNMSGKS. Positions 833 to 855 are disordered; it reads EESQLSFFGAEQSSKKQDKPALD. Over residues 845–855 the composition is skewed to basic and acidic residues; sequence SSKKQDKPALD.

This sequence belongs to the DNA mismatch repair MutS family.

Its function is as follows. This protein is involved in the repair of mismatches in DNA. It is possible that it carries out the mismatch recognition step. This protein has a weak ATPase activity. In Bacillus anthracis (strain A0248), this protein is DNA mismatch repair protein MutS.